A 355-amino-acid polypeptide reads, in one-letter code: MRGNTALMSTLKRFGITTGATAAAASKASVIFLIKNETPKTVTIPTPIGLRLEISVGNYSRKESEFCASAKKFSGDNPDILDGLEIIACSGRSNSQTITITAEEGVGTITRPGLKGDVGDKSISPIAKQMIIDAVKEVVSSGVYVKLYVPKGEELAKNTMNPLVGVEGGISILGTTGIEYPVSDEDYIEHIKSEACVVKSTGHKTLVLAPGNTSFKFAREIYGDKVIKIGDNVGSSLKVAEELGFSQVILVSLPGKLVKVAAGMLNTHSKFGDARLETLTFSSVVAGISLEKIQKIVKSLSISEGLSYLTDEERQKVMKVVSDRALEKLKRVSKLKLGVVVISEDGKIMAKSGEV.

It belongs to the CbiD family.

The enzyme catalyses Co-precorrin-5B + S-adenosyl-L-methionine = Co-precorrin-6A + S-adenosyl-L-homocysteine. The protein operates within cofactor biosynthesis; adenosylcobalamin biosynthesis; cob(II)yrinate a,c-diamide from sirohydrochlorin (anaerobic route): step 6/10. Catalyzes the methylation of C-1 in cobalt-precorrin-5B to form cobalt-precorrin-6A. The chain is Cobalt-precorrin-5B C(1)-methyltransferase from Sulfolobus acidocaldarius (strain ATCC 33909 / DSM 639 / JCM 8929 / NBRC 15157 / NCIMB 11770).